The sequence spans 156 residues: Large ribosomal subunit protein uL15 (156 aa).

The segment covering 1-11 (MKLNDLRDKPG) has biased composition (basic and acidic residues). The tract at residues 1–44 (MKLNDLRDKPGSVKARKRVGRGIGSGTGKTGGRGVKGQKSRSGV) is disordered. Residues 21 to 35 (RGIGSGTGKTGGRGV) show a composition bias toward gly residues.

Belongs to the universal ribosomal protein uL15 family. In terms of assembly, part of the 50S ribosomal subunit.

In terms of biological role, binds to the 23S rRNA. This chain is Large ribosomal subunit protein uL15, found in Brucella abortus (strain S19).